The sequence spans 582 residues: Sulfite reductase [NADPH] hemoprotein beta-component (582 aa).

The span at 1 to 12 shows a compositional bias: basic and acidic residues; that stretch reads MDLKVKVDRSRD. The interval 1 to 26 is disordered; the sequence is MDLKVKVDRSRDVSQPLDKLGPDETL. The [4Fe-4S] cluster site is built by cysteine 447, cysteine 453, cysteine 492, and cysteine 496. Cysteine 496 is a siroheme binding site.

This sequence belongs to the nitrite and sulfite reductase 4Fe-4S domain family. As to quaternary structure, alpha(8)-beta(8). The alpha component is a flavoprotein, the beta component is a hemoprotein. It depends on siroheme as a cofactor. [4Fe-4S] cluster is required as a cofactor.

It carries out the reaction hydrogen sulfide + 3 NADP(+) + 3 H2O = sulfite + 3 NADPH + 4 H(+). The protein operates within sulfur metabolism; hydrogen sulfide biosynthesis; hydrogen sulfide from sulfite (NADPH route): step 1/1. Its function is as follows. Component of the sulfite reductase complex that catalyzes the 6-electron reduction of sulfite to sulfide. This is one of several activities required for the biosynthesis of L-cysteine from sulfate. This is Sulfite reductase [NADPH] hemoprotein beta-component from Afipia carboxidovorans (strain ATCC 49405 / DSM 1227 / KCTC 32145 / OM5) (Oligotropha carboxidovorans).